Reading from the N-terminus, the 734-residue chain is Photosystem I P700 chlorophyll a apoprotein A2 (734 aa).

8 helical membrane-spanning segments follow: residues 46 to 69 (IFASHFGQLAIIFLWTSGNLFHVA), 135 to 158 (LYTGALFLLFLSAISLIAGWLHLQ), 175 to 199 (LNHHLSGLFGVSSLAWTGHLVHVAI), 273 to 291 (MAHHHLAIAFIFLVAGHMY), 330 to 353 (LHFQLGLALASLGVITSLVAQHMY), 369 to 395 (AALYTHHQYIAGFIMTGAFAHGAIFFI), 417 to 439 (AIISHLSWASLFLGFHTLGLYVH), and 517 to 535 (FLVHHAIALGLHTTTLILV). Cys-559 and Cys-568 together coordinate [4Fe-4S] cluster. Transmembrane regions (helical) follow at residues 575 to 596 (AFYLAVFWMLNTIGWVTFYWHW) and 643 to 665 (LSVWAWMFLFGHLVWATGFMFLI). Chlorophyll a-binding residues include His-654, Met-662, and Tyr-670. Trp-671 is a binding site for phylloquinone. A helical transmembrane segment spans residues 707 to 727 (LVGLAHFSVGYIFTYAAFLIA).

It belongs to the PsaA/PsaB family. In terms of assembly, the PsaA/B heterodimer binds the P700 chlorophyll special pair and subsequent electron acceptors. PSI consists of a core antenna complex that captures photons, and an electron transfer chain that converts photonic excitation into a charge separation. The eukaryotic PSI reaction center is composed of at least 11 subunits. P700 is a chlorophyll a/chlorophyll a' dimer, A0 is one or more chlorophyll a, A1 is one or both phylloquinones and FX is a shared 4Fe-4S iron-sulfur center. is required as a cofactor.

It is found in the plastid. It localises to the chloroplast thylakoid membrane. The enzyme catalyses reduced [plastocyanin] + hnu + oxidized [2Fe-2S]-[ferredoxin] = oxidized [plastocyanin] + reduced [2Fe-2S]-[ferredoxin]. Its function is as follows. PsaA and PsaB bind P700, the primary electron donor of photosystem I (PSI), as well as the electron acceptors A0, A1 and FX. PSI is a plastocyanin-ferredoxin oxidoreductase, converting photonic excitation into a charge separation, which transfers an electron from the donor P700 chlorophyll pair to the spectroscopically characterized acceptors A0, A1, FX, FA and FB in turn. Oxidized P700 is reduced on the lumenal side of the thylakoid membrane by plastocyanin. This chain is Photosystem I P700 chlorophyll a apoprotein A2, found in Cucumis sativus (Cucumber).